The sequence spans 266 residues: 4-hydroxy-tetrahydrodipicolinate reductase (266 aa).

Residue G10–M15 participates in NAD(+) binding. K38 is an NADP(+) binding site. NAD(+) contacts are provided by residues G99–T101 and A125–F128. Residue H155 is the Proton donor/acceptor of the active site. H156 contacts (S)-2,3,4,5-tetrahydrodipicolinate. K159 (proton donor) is an active-site residue. G165–T166 is a binding site for (S)-2,3,4,5-tetrahydrodipicolinate.

This sequence belongs to the DapB family.

Its subcellular location is the cytoplasm. The catalysed reaction is (S)-2,3,4,5-tetrahydrodipicolinate + NAD(+) + H2O = (2S,4S)-4-hydroxy-2,3,4,5-tetrahydrodipicolinate + NADH + H(+). It carries out the reaction (S)-2,3,4,5-tetrahydrodipicolinate + NADP(+) + H2O = (2S,4S)-4-hydroxy-2,3,4,5-tetrahydrodipicolinate + NADPH + H(+). It participates in amino-acid biosynthesis; L-lysine biosynthesis via DAP pathway; (S)-tetrahydrodipicolinate from L-aspartate: step 4/4. Functionally, catalyzes the conversion of 4-hydroxy-tetrahydrodipicolinate (HTPA) to tetrahydrodipicolinate. This is 4-hydroxy-tetrahydrodipicolinate reductase from Bacillus cytotoxicus (strain DSM 22905 / CIP 110041 / 391-98 / NVH 391-98).